Consider the following 291-residue polypeptide: MKRVFLFLITNLAVILVLSFSARLLGVDRFLTSNGLDLGMLLAFAALIGFGGSFISLLMSKTMAKWSTGARVILRASNEDESWLLNTVRQLSKKADLAMPEVAIYEGAPNAFATGPSRSKSLVAVSSGLLRSMDRKQVEAVLAHEVAHIQNGDMVTLTLIQGVVNTFVIFLARVFAYALDSFLRRDEDESGSPGIGYWISSIAFEIVFGILASIVVMYFSRKREFRADAGAAALIGDRRPMIEALRALGSIDAGKLPKEMAASGIAGGGMMALFSSHPPLESRIAALESAR.

2 helical membrane-spanning segments follow: residues 4-24 (VFLFLITNLAVILVLSFSARL) and 38-58 (LGMLLAFAALIGFGGSFISLL). Position 144 (H144) interacts with Zn(2+). The active site involves E145. H148 serves as a coordination point for Zn(2+). A run of 2 helical transmembrane segments spans residues 159–179 (LIQGVVNTFVIFLARVFAYAL) and 199–219 (ISSIAFEIVFGILASIVVMYF). E224 provides a ligand contact to Zn(2+).

The protein belongs to the peptidase M48B family. Requires Zn(2+) as cofactor.

It is found in the cell inner membrane. This chain is Protease HtpX homolog, found in Chlorobium luteolum (strain DSM 273 / BCRC 81028 / 2530) (Pelodictyon luteolum).